The primary structure comprises 433 residues: Glucoside xylosyltransferase 1 (433 aa).

Residues 1–6 (MRRFAR) are Cytoplasmic-facing. A helical; Signal-anchor for type II membrane protein membrane pass occupies residues 7–29 (VALLFLGCGVCSLLYGVSQLALS). Over 30–433 (LEQEAGGARQ…DLSVRRSKGS (404 aa)) the chain is Lumenal. Positions 39–64 (QRQARESAAPGGGRQAGSADGGEEGA) are disordered. Residues Asn-69, Asn-166, Asn-271, Asn-305, and Asn-380 are each glycosylated (N-linked (GlcNAc...) asparagine).

Belongs to the glycosyltransferase 8 family.

The protein localises to the membrane. The catalysed reaction is 3-O-(beta-D-glucosyl)-L-seryl-[EGF-like domain protein] + UDP-alpha-D-xylose = 3-O-[alpha-D-xylosyl-(1-&gt;3)-beta-D-glucosyl]-L-seryl-[EGF-like domain protein] + UDP + H(+). Its function is as follows. Glycosyltransferase which elongates the O-linked glucose attached to EGF-like repeats in the extracellular domain of Notch proteins by catalyzing the addition of xylose. This chain is Glucoside xylosyltransferase 1 (GXYLT1), found in Gallus gallus (Chicken).